Here is a 98-residue protein sequence, read N- to C-terminus: NADH-ubiquinone oxidoreductase chain 4L (98 aa).

Transmembrane regions (helical) follow at residues 1-21, 29-49, and 61-81; these read MPST…GLLL, SLLC…LMAL, and IVLM…LVMV.

It belongs to the complex I subunit 4L family. In terms of assembly, core subunit of respiratory chain NADH dehydrogenase (Complex I) which is composed of 45 different subunits.

Its subcellular location is the mitochondrion inner membrane. The catalysed reaction is a ubiquinone + NADH + 5 H(+)(in) = a ubiquinol + NAD(+) + 4 H(+)(out). Its function is as follows. Core subunit of the mitochondrial membrane respiratory chain NADH dehydrogenase (Complex I) which catalyzes electron transfer from NADH through the respiratory chain, using ubiquinone as an electron acceptor. Part of the enzyme membrane arm which is embedded in the lipid bilayer and involved in proton translocation. This chain is NADH-ubiquinone oxidoreductase chain 4L (MT-ND4L), found in Choloepus didactylus (Southern two-toed sloth).